The primary structure comprises 220 residues: Glutathione S-transferase U23 (220 aa).

The 80-residue stretch at 3 to 82 (EEIILLDYWA…YIDELWPDTN (80 aa)) folds into the GST N-terminal domain. Glutathione-binding positions include 13–14 (SM), 39–40 (NK), 53–54 (KI), and 66–67 (ES). The 121-residue stretch at 88-208 (DPYQRAQARF…LPDSDKVLKS (121 aa)) folds into the GST C-terminal domain.

The protein belongs to the GST superfamily. Tau family.

The protein localises to the cytoplasm. Its subcellular location is the cytosol. The enzyme catalyses RX + glutathione = an S-substituted glutathione + a halide anion + H(+). May be involved in the conjugation of reduced glutathione to a wide number of exogenous and endogenous hydrophobic electrophiles and have a detoxification role against certain herbicides. This is Glutathione S-transferase U23 (GSTU23) from Arabidopsis thaliana (Mouse-ear cress).